The primary structure comprises 255 residues: Methylthioribulose-1-phosphate dehydratase (255 aa).

Cys-98 serves as a coordination point for substrate. Zn(2+) contacts are provided by His-116 and His-118. Glu-150 serves as the catalytic Proton donor/acceptor. A Zn(2+)-binding site is contributed by His-207.

The protein belongs to the aldolase class II family. MtnB subfamily. The cofactor is Zn(2+).

It localises to the cytoplasm. The enzyme catalyses 5-(methylsulfanyl)-D-ribulose 1-phosphate = 5-methylsulfanyl-2,3-dioxopentyl phosphate + H2O. It functions in the pathway amino-acid biosynthesis; L-methionine biosynthesis via salvage pathway; L-methionine from S-methyl-5-thio-alpha-D-ribose 1-phosphate: step 2/6. In terms of biological role, catalyzes the dehydration of methylthioribulose-1-phosphate (MTRu-1-P) into 2,3-diketo-5-methylthiopentyl-1-phosphate (DK-MTP-1-P). The protein is Methylthioribulose-1-phosphate dehydratase of Pyricularia oryzae (strain 70-15 / ATCC MYA-4617 / FGSC 8958) (Rice blast fungus).